The sequence spans 343 residues: NADH-cytochrome b5 reductase 2 (343 aa).

A helical transmembrane segment spans residues 41–61 (ILLGAAAVGLAGAGAYFFSGA). In terms of domain architecture, FAD-binding FR-type spans 92–197 (QGWLSLKLEE…KGPLPKYPWE (106 aa)). 200-235 (KHKHIALVAGGTGITPMYQLIRAIFNNPDDKTKVTL) is an FAD binding site.

Belongs to the flavoprotein pyridine nucleotide cytochrome reductase family. It depends on FAD as a cofactor.

The protein localises to the mitochondrion outer membrane. The enzyme catalyses 2 Fe(III)-[cytochrome b5] + NADH = 2 Fe(II)-[cytochrome b5] + NAD(+) + H(+). Its function is as follows. May mediate the reduction of outer membrane cytochrome b5. This Neurospora crassa (strain ATCC 24698 / 74-OR23-1A / CBS 708.71 / DSM 1257 / FGSC 987) protein is NADH-cytochrome b5 reductase 2 (mcr-1).